A 200-amino-acid polypeptide reads, in one-letter code: GTP-binding protein rho5 (200 aa).

Residue Gly-13–Thr-20 coordinates GTP. Positions Tyr-35–Tyr-43 match the Effector region motif. GTP-binding positions include Asp-60–Gln-64 and Cys-118–Asp-121. Cysteine methyl ester is present on Cys-197. A lipid anchor (S-geranylgeranyl cysteine) is attached at Cys-197. Positions Ile-198–Leu-200 are cleaved as a propeptide — removed in mature form.

This sequence belongs to the small GTPase superfamily. Rho family.

The protein resides in the cell membrane. The protein is GTP-binding protein rho5 (rho5) of Schizosaccharomyces pombe (strain 972 / ATCC 24843) (Fission yeast).